A 126-amino-acid chain; its full sequence is Cyclin-dependent kinase 2-associated protein 2 (126 aa).

Residues Met-1–Phe-48 are disordered. The segment covering Ala-9–Pro-43 has biased composition (low complexity). Residues Pro-64 to Ile-106 form an interaction with CDK2 region.

Belongs to the CDK2AP family. In terms of assembly, component of the nucleosome remodeling and deacetylase (NuRD) repressor complex, composed of core proteins MTA1, MTA2, MTA3, RBBP4, RBBP7, HDAC1, HDAC2, MBD2, MBD3, and peripherally associated proteins CDK2AP1, CDK2AP2, GATAD2A, GATAD2B, CHD3, CHD4 and CHD5. The exact stoichiometry of the NuRD complex is unknown, and some subunits such as MBD2 and MBD3, GATAD2A and GATAD2B, and CHD3, CHD4 and CHD5 define mutually exclusive NuRD complexes. Interacts with CDK2AP1. Interacts with CDK2. Interacts with MAPK1. In terms of processing, phosphorylated by MAPK1 and CDK2. In terms of tissue distribution, ubiquitous.

Its subcellular location is the cytoplasm. It is found in the nucleus. Functionally, acts as a component of the histone deacetylase NuRD complex which participates in the remodeling of chromatin. Inhibits cell cycle G1/S phase transition by repressing CDK2 expression and activation; represses CDK2 activation by inhibiting its interaction with cyclin E and A. Plays a role in regulating the self-renewal of embryonic stem cells (ESCs) and in maintaining cell survival during terminal differentiation of ESCs. Regulates microtubule organization of metaphase II oocytes. In Homo sapiens (Human), this protein is Cyclin-dependent kinase 2-associated protein 2 (CDK2AP2).